The following is a 279-amino-acid chain: MLLLVTLALLAGPTCRAQNILGNNVGTYFYVAGEEHGQLRGIRIFLTVIDLIKGIQLRFGGNWSDVYGSRSLKYKEFLLEDGEHVTQVSGTRKLCLTSLSFTTNKGRVVTFGVRRGLSFNESGGSDKYLVTVNGLYAPGLCLNGMGFKWKNIHDDFDDNDDDKEDDDDEHDDDNEEDHGDKDNDNDHDDDHDDDDDDKEDDNEEDVDDERDDKDDDEEDDDNDKENDKDDGEGSGDDDDNDDEDDDKDDDGGSGDDGDDGDDDEDDDGGDDDNGDEEEE.

The first 17 residues, 1–17 (MLLLVTLALLAGPTCRA), serve as a signal peptide directing secretion. A Pyrrolidone carboxylic acid modification is found at Q18. Residues 18 to 151 (QNILGNNVGT…LNGMGFKWKN (134 aa)) form the Jacalin-type lectin domain. A glycan (N-linked (GlcNAc...) asparagine) is linked at N62. 2 stretches are compositionally biased toward acidic residues: residues 160–177 (DDDKEDDDDEHDDDNEED) and 185–279 (NDHD…EEEE). The tract at residues 160-279 (DDDKEDDDDE…DDDNGDEEEE (120 aa)) is disordered.

This sequence to mouse SBP. Prostate.

In terms of biological role, spermine-binding protein is an androgen regulated ventral prostate glycoprotein that binds various polyamines. In Rattus norvegicus (Rat), this protein is Prostatic spermine-binding protein (Sbp).